A 586-amino-acid polypeptide reads, in one-letter code: 2-succinyl-5-enolpyruvyl-6-hydroxy-3-cyclohexene-1-carboxylate synthase (586 aa).

It belongs to the TPP enzyme family. MenD subfamily. Homodimer. Mg(2+) is required as a cofactor. It depends on Mn(2+) as a cofactor. The cofactor is thiamine diphosphate.

It carries out the reaction isochorismate + 2-oxoglutarate + H(+) = 5-enolpyruvoyl-6-hydroxy-2-succinyl-cyclohex-3-ene-1-carboxylate + CO2. It participates in quinol/quinone metabolism; 1,4-dihydroxy-2-naphthoate biosynthesis; 1,4-dihydroxy-2-naphthoate from chorismate: step 2/7. Its pathway is cofactor biosynthesis; phylloquinone biosynthesis. Functionally, catalyzes the thiamine diphosphate-dependent decarboxylation of 2-oxoglutarate and the subsequent addition of the resulting succinic semialdehyde-thiamine pyrophosphate anion to isochorismate to yield 2-succinyl-5-enolpyruvyl-6-hydroxy-3-cyclohexene-1-carboxylate (SEPHCHC). The sequence is that of 2-succinyl-5-enolpyruvyl-6-hydroxy-3-cyclohexene-1-carboxylate synthase from Acaryochloris marina (strain MBIC 11017).